The following is a 143-amino-acid chain: Endoribonuclease YbeY (143 aa).

His-109, His-113, and His-119 together coordinate Zn(2+).

The protein belongs to the endoribonuclease YbeY family. The cofactor is Zn(2+).

The protein localises to the cytoplasm. Functionally, single strand-specific metallo-endoribonuclease involved in late-stage 70S ribosome quality control and in maturation of the 3' terminus of the 16S rRNA. This Leptospira borgpetersenii serovar Hardjo-bovis (strain JB197) protein is Endoribonuclease YbeY.